We begin with the raw amino-acid sequence, 166 residues long: Eukaryotic translation initiation factor 5A (166 aa).

Positions 1–21 (MSDEDHDFSHQGGGDNASKTY) are disordered. K53 carries the hypusine modification. The tract at residues 101–121 (EDPSLPSHLSLMDDEGESRED) is disordered. Acidic residues predominate over residues 112-121 (MDDEGESRED).

This sequence belongs to the eIF-5A family. Post-translationally, lys-53 undergoes hypusination, a unique post-translational modification that consists in the addition of a butylamino group from spermidine to lysine side chain, leading to the formation of the unusual amino acid hypusine. eIF-5As are the only known proteins to undergo this modification, which is essential for their function.

It is found in the cytoplasm. Translation factor that promotes translation elongation and termination, particularly upon ribosome stalling at specific amino acid sequence contexts. Binds between the exit (E) and peptidyl (P) site of the ribosome and promotes rescue of stalled ribosome: specifically required for efficient translation of polyproline-containing peptides as well as other motifs that stall the ribosome. Acts as a ribosome quality control (RQC) cofactor by joining the RQC complex to facilitate peptidyl transfer during CAT tailing step. This is Eukaryotic translation initiation factor 5A from Leishmania donovani.